Consider the following 1256-residue polypeptide: MLFKLLQRQTYTCLSHRYGLYVCFLGVVVTIVSAFQFGEVVLEWSRDQYHVLFDSYRDNIAGKSFQNRLCLPMPIDVVYTWVNGTDLELLKELQQVREQMEEEQKAMREILGKNTTEPTKKSEKQLECLLTHCIKVPMLVLDPALPANITLKDLPSLYPSFHSASDIFNVAKPKNPSTNVSVVVFDSTKDVEDAHSGLLKGNSRQTVWRGYLTTDKEVPGLVLMQDLAFLSGFPPTFKETNQLKTKLPENLSSKVKLLQLYSEASVALLKLNNPKDFQELNKQTKKNMTIDGKELTISPAYLLWDLSAISQSKQDEDISASRFEDNEELRYSLRSIERHAPWVRNIFIVTNGQIPSWLNLDNPRVTIVTHQDVFRNLSHLPTFSSPAIESHIHRIEGLSQKFIYLNDDVMFGKDVWPDDFYSHSKGQKVYLTWPVPNCAEGCPGSWIKDGYCDKACNNSACDWDGGDCSGNSGGSRYIAGGGGTGSIGVGQPWQFGGGINSVSYCNQGCANSWLADKFCDQACNVLSCGFDAGDCGQDHFHELYKVILLPNQTHYIIPKGECLPYFSFAEVAKRGVEGAYSDNPIIRHASIANKWKTIHLIMHSGMNATTIHFNLTFQNTNDEEFKMQITVEVDTREGPKLNSTAQKGYENLVSPITLLPEAEILFEDIPKEKRFPKFKRHDVNSTRRAQEEVKIPLVNISLLPKDAQLSLNTLDLQLEHGDITLKGYNLSKSALLRSFLMNSQHAKIKNQAIITDETNDSLVAPQEKQVHKSILPNSLGVSERLQRLTFPAVSVKVNGHDQGQNPPLDLETTARFRVETHTQKTIGGNVTKEKPPSLIVPLESQMTKEKKITGKEKENSRMEENAENHIGVTEVLLGRKLQHYTDSYLGFLPWEKKKYFQDLLDEEESLKTQLAYFTDSKNTGRQLKDTFADSLRYVNKILNSKFGFTSRKVPAHMPHMIDRIVMQELQDMFPEEFDKTSFHKVRHSEDMQFAFSYFYYLMSAVQPLNISQVFDEVDTDQSGVLSDREIRTLATRIHELPLSLQDLTGLEHMLINCSKMLPADITQLNNIPPTQESYYDPNLPPVTKSLVTNCKPVTDKIHKAYKDKNKYRFEIMGEEEIAFKMIRTNVSHVVGQLDDIRKNPRKFVCLNDNIDHNHKDAQTVKAVLRDFYESMFPIPSQFELPREYRNRFLHMHELQEWRAYRDKLKFWTHCVLATLIMFTIFSFFAEQLIALKRKIFPRRRIHKEASPNRIRV.

A helical membrane pass occupies residues 22-42 (VCFLGVVVTIVSAFQFGEVVL). Residues Asn83, Asn114, Asn148, Asn179, and Asn250 are each glycosylated (N-linked (GlcNAc...) asparagine). 4 disulfide bridges follow: Cys438/Cys461, Cys452/Cys468, Cys505/Cys528, and Cys519/Cys535. LNR repeat units follow at residues 438 to 473 (CAEG…GNSG) and 505 to 545 (CNQG…ELYK). 6 residues coordinate Ca(2+): Asp449, Asp464, Asp467, Asp516, Asp531, and Asp534. 5 N-linked (GlcNAc...) asparagine glycosylation sites follow: Asn614, Asn699, Asn729, Asn829, and Asn1009. Residues 699 to 798 (NISLLPKDAQ…TFPAVSVKVN (100 aa)) form the DMAP1-binding domain. One can recognise an EF-hand domain in the interval 1005-1040 (VQPLNISQVFDEVDTDQSGVLSDREIRTLATRIHEL). Ca(2+) is bound by residues Asp1018, Asp1020, Ser1022, and Glu1029. N-linked (GlcNAc...) asparagine glycosylation occurs at Asn1129. A helical transmembrane segment spans residues 1215-1235 (VLATLIMFTIFSFFAEQLIAL).

This sequence belongs to the stealth family. Hexamer of two alpha, two beta and two gamma (GNPTG) subunits; disulfide-linked. The alpha and/or the beta subunits of the enzyme constitute the catalytic subunits. Interacts with LYSET; facilitates proper localization of GNPTAB. The alpha- and beta-subunits are generated by a proteolytic cleavage by MBTPS1 protease at the Lys-928-Asp-929 bond. Expressed in the heart, whole brain, placenta, lung, liver, skeletal muscle, kidney and pancreas.

The protein localises to the golgi apparatus membrane. It carries out the reaction N(4)-[alpha-D-mannosyl-(1-&gt;2)-alpha-D-mannosyl-(glycan)]-L-asparaginyl-[protein] + UDP-N-acetyl-alpha-D-glucosamine = N(4)-[6-(N-acetyl-alpha-D-glucosaminyl-1-phospho)-alpha-D-mannosyl-(1-&gt;2)-alpha-D-mannosyl-(glycan)]-L-asparaginyl-[protein] + UMP + H(+). Functionally, catalyzes the formation of mannose 6-phosphate (M6P) markers on high mannose type oligosaccharides in the Golgi apparatus. M6P residues are required to bind to the M6P receptors (MPR), which mediate the vesicular transport of lysosomal enzymes to the endosomal/prelysosomal compartment. This chain is N-acetylglucosamine-1-phosphotransferase subunits alpha/beta (GNPTAB), found in Homo sapiens (Human).